We begin with the raw amino-acid sequence, 274 residues long: Formamidopyrimidine-DNA glycosylase (274 aa).

Proline 2 functions as the Schiff-base intermediate with DNA in the catalytic mechanism. Glutamate 3 serves as the catalytic Proton donor. Catalysis depends on lysine 59, which acts as the Proton donor; for beta-elimination activity. DNA is bound by residues histidine 93, arginine 112, and lysine 153. The segment at 238-272 (QVHTKFNKPCPNCGELIQKIKLGGRGTYFCKKCQQ) adopts an FPG-type zinc-finger fold. Arginine 262 functions as the Proton donor; for delta-elimination activity in the catalytic mechanism.

The protein belongs to the FPG family. Monomer. Zn(2+) serves as cofactor.

It catalyses the reaction Hydrolysis of DNA containing ring-opened 7-methylguanine residues, releasing 2,6-diamino-4-hydroxy-5-(N-methyl)formamidopyrimidine.. It carries out the reaction 2'-deoxyribonucleotide-(2'-deoxyribose 5'-phosphate)-2'-deoxyribonucleotide-DNA = a 3'-end 2'-deoxyribonucleotide-(2,3-dehydro-2,3-deoxyribose 5'-phosphate)-DNA + a 5'-end 5'-phospho-2'-deoxyribonucleoside-DNA + H(+). Its function is as follows. Involved in base excision repair of DNA damaged by oxidation or by mutagenic agents. Acts as a DNA glycosylase that recognizes and removes damaged bases. Has a preference for oxidized purines, such as 7,8-dihydro-8-oxoguanine (8-oxoG). Has AP (apurinic/apyrimidinic) lyase activity and introduces nicks in the DNA strand. Cleaves the DNA backbone by beta-delta elimination to generate a single-strand break at the site of the removed base with both 3'- and 5'-phosphates. This Mycoplasma mobile (strain ATCC 43663 / 163K / NCTC 11711) (Mesomycoplasma mobile) protein is Formamidopyrimidine-DNA glycosylase.